Consider the following 38-residue polypeptide: Humanin-like protein (38 aa).

As to expression, in the testis, expressed in Leydig cells at 10, 20 and 60 days of age (at protein level). Also expressed in pachytene spermatocytes at day 20 and in vessels, peritubular cells and spermatids at day 60. Not detected in Sertoli cells (at protein level). In the adult ovary, expressed in stromal cells, granulosa cells, theca cells and oocytes at diestrus and proestrus (at protein level). Expressed in the anterior pituitary where it is detected in lactotropes and somatotropes with lower levels in females than males (at protein level). In the hippocampus, expressed in astrocytes but not in neurons or oligodendrocytes (at protein level). Expressed in muscle, liver and hypothalamus but not in epididymal fat (at protein level). Widely expressed with highest levels in cardiac and skeletal muscle and lowest levels in lung, testis and uterus. In the CNS, levels are relatively high in the cerebellum and cortex and low in the hippocampus. In the hippocampus, lower levels are detected in ovariectomized animals than in controls.

It is found in the mitochondrion. It localises to the secreted. The protein resides in the cytoplasm. In terms of biological role, plays a role as a neuroprotective factor. Protects against neuronal cell death induced by amyloid-beta peptides. Also protects against excitotoxic cell death. Prevents amyloid-beta peptide-induced spatial learning and memory impairments, protects against amyloid-beta peptide-induced suppression of hippocampal long-term potentiation, and inhibits amyloid-beta peptide-induced activation of STAT3 and inhibition of CASP3. Prevents glutamate-induced dendritic atrophy in hippocampal neurons and also prevents glutamate-induced decrease in SYP puncta number and total puncta area. Protects anterior pituitary cells from TNF-induced apoptosis. Plays a role in ovarian follicle development by acting as a cryoprotective factor for granulosa cells in the antral follicle. Increases androgen production in Leydig cells and promotes Leydig cell survival by preventing apoptosis. This Rattus norvegicus (Rat) protein is Humanin-like protein.